The sequence spans 70 residues: Small ribosomal subunit protein bS18c (70 aa).

It belongs to the bacterial ribosomal protein bS18 family. Part of the 30S ribosomal subunit.

The protein resides in the plastid. Its subcellular location is the chloroplast. This Pyropia yezoensis (Susabi-nori) protein is Small ribosomal subunit protein bS18c.